A 346-amino-acid polypeptide reads, in one-letter code: 4-hydroxy-3-methylbut-2-enyl diphosphate reductase (346 aa).

Position 19 (cysteine 19) interacts with [4Fe-4S] cluster. The (2E)-4-hydroxy-3-methylbut-2-enyl diphosphate site is built by histidine 48 and histidine 84. Dimethylallyl diphosphate is bound by residues histidine 48 and histidine 84. Isopentenyl diphosphate is bound by residues histidine 48 and histidine 84. Cysteine 106 contributes to the [4Fe-4S] cluster binding site. Histidine 134 contacts (2E)-4-hydroxy-3-methylbut-2-enyl diphosphate. Position 134 (histidine 134) interacts with dimethylallyl diphosphate. Histidine 134 lines the isopentenyl diphosphate pocket. Glutamate 136 serves as the catalytic Proton donor. Threonine 175 is a (2E)-4-hydroxy-3-methylbut-2-enyl diphosphate binding site. [4Fe-4S] cluster is bound at residue cysteine 205. (2E)-4-hydroxy-3-methylbut-2-enyl diphosphate contacts are provided by serine 233, serine 234, asparagine 235, and serine 278. Dimethylallyl diphosphate-binding residues include serine 233, serine 234, asparagine 235, and serine 278. Isopentenyl diphosphate-binding residues include serine 233, serine 234, asparagine 235, and serine 278.

Belongs to the IspH family. The cofactor is [4Fe-4S] cluster.

The enzyme catalyses isopentenyl diphosphate + 2 oxidized [2Fe-2S]-[ferredoxin] + H2O = (2E)-4-hydroxy-3-methylbut-2-enyl diphosphate + 2 reduced [2Fe-2S]-[ferredoxin] + 2 H(+). It carries out the reaction dimethylallyl diphosphate + 2 oxidized [2Fe-2S]-[ferredoxin] + H2O = (2E)-4-hydroxy-3-methylbut-2-enyl diphosphate + 2 reduced [2Fe-2S]-[ferredoxin] + 2 H(+). It functions in the pathway isoprenoid biosynthesis; dimethylallyl diphosphate biosynthesis; dimethylallyl diphosphate from (2E)-4-hydroxy-3-methylbutenyl diphosphate: step 1/1. The protein operates within isoprenoid biosynthesis; isopentenyl diphosphate biosynthesis via DXP pathway; isopentenyl diphosphate from 1-deoxy-D-xylulose 5-phosphate: step 6/6. Catalyzes the conversion of 1-hydroxy-2-methyl-2-(E)-butenyl 4-diphosphate (HMBPP) into a mixture of isopentenyl diphosphate (IPP) and dimethylallyl diphosphate (DMAPP). Acts in the terminal step of the DOXP/MEP pathway for isoprenoid precursor biosynthesis. This chain is 4-hydroxy-3-methylbut-2-enyl diphosphate reductase, found in Brucella abortus (strain S19).